The following is a 478-amino-acid chain: DNA gyrase subunit B (478 aa).

The 120-residue stretch at 319 to 438 (CELYLVEGDS…GGHVYIAQPP (120 aa)) folds into the Toprim domain. E325, D403, and D405 together coordinate Mg(2+).

The protein belongs to the type II topoisomerase GyrB family. Heterotetramer, composed of two GyrA and two GyrB chains. In the heterotetramer, GyrA contains the active site tyrosine that forms a transient covalent intermediate with DNA, while GyrB binds cofactors and catalyzes ATP hydrolysis. The cofactor is Mg(2+). Mn(2+) is required as a cofactor. It depends on Ca(2+) as a cofactor.

The protein localises to the cytoplasm. The enzyme catalyses ATP-dependent breakage, passage and rejoining of double-stranded DNA.. In terms of biological role, a type II topoisomerase that negatively supercoils closed circular double-stranded (ds) DNA in an ATP-dependent manner to modulate DNA topology and maintain chromosomes in an underwound state. Negative supercoiling favors strand separation, and DNA replication, transcription, recombination and repair, all of which involve strand separation. Also able to catalyze the interconversion of other topological isomers of dsDNA rings, including catenanes and knotted rings. Type II topoisomerases break and join 2 DNA strands simultaneously in an ATP-dependent manner. This Cytophaga hutchinsonii protein is DNA gyrase subunit B (gyrB).